Here is an 87-residue protein sequence, read N- to C-terminus: UPF0250 protein KPN78578_06520 (87 aa).

This sequence belongs to the UPF0250 family.

The protein is UPF0250 protein KPN78578_06520 of Klebsiella pneumoniae subsp. pneumoniae (strain ATCC 700721 / MGH 78578).